A 347-amino-acid chain; its full sequence is L-threonine 3-dehydrogenase (347 aa).

Residue cysteine 42 participates in Zn(2+) binding. Residues threonine 44 and histidine 47 each act as charge relay system in the active site. Zn(2+) is bound by residues histidine 67, glutamate 68, cysteine 97, cysteine 100, cysteine 103, and cysteine 111. NAD(+) contacts are provided by residues isoleucine 180, aspartate 200, arginine 205, 267–269 (LSL), and 292–293 (IT).

It belongs to the zinc-containing alcohol dehydrogenase family. Homotetramer. It depends on Zn(2+) as a cofactor.

The protein resides in the cytoplasm. It carries out the reaction L-threonine + NAD(+) = (2S)-2-amino-3-oxobutanoate + NADH + H(+). It functions in the pathway amino-acid degradation; L-threonine degradation via oxydo-reductase pathway; glycine from L-threonine: step 1/2. Its function is as follows. Catalyzes the NAD(+)-dependent oxidation of L-threonine to 2-amino-3-ketobutyrate. The sequence is that of L-threonine 3-dehydrogenase from Bacillus velezensis (strain DSM 23117 / BGSC 10A6 / LMG 26770 / FZB42) (Bacillus amyloliquefaciens subsp. plantarum).